The chain runs to 607 residues: Protein NRT1/ PTR FAMILY 1.2 (607 aa).

The next 10 membrane-spanning stretches (helical) occupy residues 65–85 (TNVLFMWSAASNFTPLLGAFL), 96–116 (ISIASLSSFLGMVLLWLTAML), 138–158 (ASQLALLYSAFALISIGSGGI), 185–205 (FFGWYYASSAVAVLIAFTGIV), 215–235 (IGFGVPAVLMLIAALLFILAS), 374–394 (VPAGSFGMFTIIALALWVILY), 418–438 (MGLGLFMSFLAMAISAMVESF), 460–480 (AMWLVPQYVLHGLAEALTAIG), 496–516 (IAASLFGLGMAVASLLASVVL), and 544–564 (YYWVLAIMSFINVIYYVICSW). The residue at position 601 (Ser-601) is a Phosphoserine.

Belongs to the major facilitator superfamily. Proton-dependent oligopeptide transporter (POT/PTR) (TC 2.A.17) family. Expressed in shoots, stems, leaves, flowers and siliques. Mainly detected in larger expanded leaves, in the companion cells of major veins.

The protein localises to the cell membrane. Low-affinity nitrate transporter involved in xylem-to-phloem transfer for redistributing nitrate into developing leaves. Not involved in dipeptides transport. The sequence is that of Protein NRT1/ PTR FAMILY 1.2 (NPF1.2) from Arabidopsis thaliana (Mouse-ear cress).